The sequence spans 243 residues: Probable transcriptional regulatory protein Ldb0677 (243 aa).

Residues 1-22 (MSGHSKWHNIQGRKNAQDAKRG) form a disordered region.

Belongs to the TACO1 family.

It localises to the cytoplasm. The protein is Probable transcriptional regulatory protein Ldb0677 of Lactobacillus delbrueckii subsp. bulgaricus (strain ATCC 11842 / DSM 20081 / BCRC 10696 / JCM 1002 / NBRC 13953 / NCIMB 11778 / NCTC 12712 / WDCM 00102 / Lb 14).